We begin with the raw amino-acid sequence, 176 residues long: Large ribosomal subunit protein uL6 (176 aa).

It belongs to the universal ribosomal protein uL6 family. Part of the 50S ribosomal subunit.

Functionally, this protein binds to the 23S rRNA, and is important in its secondary structure. It is located near the subunit interface in the base of the L7/L12 stalk, and near the tRNA binding site of the peptidyltransferase center. The sequence is that of Large ribosomal subunit protein uL6 from Lactobacillus acidophilus (strain ATCC 700396 / NCK56 / N2 / NCFM).